The primary structure comprises 2209 residues: Genome polyprotein (2209 aa).

Gly2 carries the N-myristoyl glycine; by host lipid modification. The Cytoplasmic segment spans residues 2–1520; that stretch reads GAQVSSQKVG…NINRAMTILQ (1519 aa). The segment at 580–600 is amphipathic alpha-helix; sequence GLGQMLESMIDNTVRETVGAA. Catalysis depends on for protease 2A activity residues His901 and Asp919. Zn(2+) is bound by residues Cys936 and Cys938. Cys990 serves as the catalytic For protease 2A activity. Zn(2+)-binding residues include Cys996 and His998. A membrane-binding region spans residues 1128–1200; the sequence is GDSWLKKFTE…HQSCPSQEHQ (73 aa). Residues 1128 to 1266 form an oligomerization region; sequence GDSWLKKFTE…SPGTGKSVAT (139 aa). Residues 1149–1153 are RNA-binding; that stretch reads SNKIS. One can recognise an SF3 helicase domain in the interval 1232-1388; that stretch reads EHTINNYIQF…NEYSRDGKLN (157 aa). 1256-1263 is an ATP binding site; it reads GSPGTGKS. Positions 1396, 1399, 1408, and 1413 each coordinate Zn(2+). The C4-type zinc-finger motif lies at 1396–1413; that stretch reads CKNCHQPANFKRCCPLVC. The RNA-binding stretch occupies residues 1440 to 1447; that stretch reads ERNRRSNI. Positions 1451 to 1456 are oligomerization; it reads MEALFQ. The stretch at 1521–1536 is an intramembrane region; sequence AVTTFAAVAGVVYVMY. Residues 1537–2209 lie on the Cytoplasmic side of the membrane; it reads KLFAGHQGAY…TLYRRWLDSF (673 aa). Tyr1546 bears the O-(5'-phospho-RNA)-tyrosine mark. Residues 1566–1744 form the Peptidase C3 domain; that stretch reads GPGFDYAVAM…FAAALKRSYF (179 aa). Catalysis depends on for protease 3C activity residues His1605, Glu1636, and Cys1712. One can recognise a RdRp catalytic domain in the interval 1975-2090; the sequence is EKLFAFDYTG…SYPHEVDASL (116 aa). Mg(2+) is bound by residues Asp1981 and Asp2076.

Belongs to the picornaviruses polyprotein family. Interacts with capsid protein VP1 and capsid protein VP3 to form heterotrimeric protomers. In terms of assembly, interacts with capsid protein VP0, and capsid protein VP3 to form heterotrimeric protomers. Interacts with human PVR. Five protomers subsequently associate to form pentamers which serve as building blocks for the capsid. Interacts with capsid protein VP2, capsid protein VP3 and capsid protein VP4 following cleavage of capsid protein VP0. As to quaternary structure, interacts with capsid protein VP1 and capsid protein VP3 in the mature capsid. Interacts with capsid protein VP0 and capsid protein VP1 to form heterotrimeric protomers. Five protomers subsequently associate to form pentamers which serve as building blocks for the capsid. Interacts with capsid protein VP4 in the mature capsid. Interacts with protein 2C; this interaction may be important for virion morphogenesis. In terms of assembly, interacts with capsid protein VP1 and capsid protein VP3. As to quaternary structure, homodimer. Homohexamer; forms a hexameric ring structure with 6-fold symmetry characteristic of AAA+ ATPases. Interacts (via N-terminus) with host RTN3 (via reticulon domain); this interaction is important for viral replication. Interacts with capsid protein VP3; this interaction may be important for virion morphogenesis. In terms of assembly, interacts with protein 3CD. As to quaternary structure, homodimer. Interacts with host GBF1. Interacts (via GOLD domain) with host ACBD3 (via GOLD domain); this interaction allows the formation of a viral protein 3A/ACBD3 heterotetramer with a 2:2 stoichiometry, which will stimulate the recruitment of host PI4KB in order to synthesize PI4P at the viral RNA replication sites. Interacts with RNA-directed RNA polymerase. In terms of assembly, interacts with protein 3AB and with RNA-directed RNA polymerase. As to quaternary structure, interacts with Viral protein genome-linked and with protein 3CD. Mg(2+) is required as a cofactor. In terms of processing, specific enzymatic cleavages in vivo by the viral proteases yield processing intermediates and the mature proteins. Myristoylation is required for the formation of pentamers during virus assembly. Further assembly of 12 pentamers and a molecule of genomic RNA generates the provirion. Post-translationally, during virion maturation, immature virions are rendered infectious following cleavage of VP0 into VP4 and VP2. This maturation seems to be an autocatalytic event triggered by the presence of RNA in the capsid and it is followed by a conformational change infectious virion. In terms of processing, myristoylation is required during RNA encapsidation and formation of the mature virus particle. VPg is uridylylated by the polymerase into VPg-pUpU. This acts as a nucleotide-peptide primer for the genomic RNA replication.

The protein localises to the virion. Its subcellular location is the host cytoplasm. It is found in the host cytoplasmic vesicle membrane. It localises to the host nucleus. It catalyses the reaction a ribonucleoside 5'-triphosphate + H2O = a ribonucleoside 5'-diphosphate + phosphate + H(+). It carries out the reaction Selective cleavage of Tyr-|-Gly bond in the picornavirus polyprotein.. The catalysed reaction is RNA(n) + a ribonucleoside 5'-triphosphate = RNA(n+1) + diphosphate. The enzyme catalyses Selective cleavage of Gln-|-Gly bond in the poliovirus polyprotein. In other picornavirus reactions Glu may be substituted for Gln, and Ser or Thr for Gly.. With respect to regulation, replication or transcription is subject to high level of random mutations by the nucleotide analog ribavirin. Forms an icosahedral capsid of pseudo T=3 symmetry with capsid proteins VP2 and VP3. The capsid is 300 Angstroms in diameter, composed of 60 copies of each capsid protein and enclosing the viral positive strand RNA genome. Capsid protein VP1 mainly forms the vertices of the capsid. Capsid protein VP1 interacts with host cell receptor PVR to provide virion attachment to target host cells. This attachment induces virion internalization predominantly through clathrin- and caveolin-independent endocytosis in Hela cells and through caveolin-mediated endocytosis in brain microvascular endothelial cells. Tyrosine kinases are probably involved in the entry process. Virus binding to PVR induces increased junctional permeability and rearrangement of junctional proteins. Modulation of endothelial tight junctions, as well as cytolytic infection of endothelial cells themselves, may result in loss of endothelial integrity which may help the virus to reach the CNS. After binding to its receptor, the capsid undergoes conformational changes. Capsid protein VP1 N-terminus (that contains an amphipathic alpha-helix) and capsid protein VP4 are externalized. Together, they shape a pore in the host membrane through which viral genome is translocated to host cell cytoplasm. Its function is as follows. Forms an icosahedral capsid of pseudo T=3 symmetry with capsid proteins VP2 and VP3. The capsid is 300 Angstroms in diameter, composed of 60 copies of each capsid protein and enclosing the viral positive strand RNA genome. In terms of biological role, lies on the inner surface of the capsid shell. After binding to the host receptor, the capsid undergoes conformational changes. Capsid protein VP4 is released, Capsid protein VP1 N-terminus is externalized, and together, they shape a pore in the host membrane through which the viral genome is translocated into the host cell cytoplasm. Functionally, component of immature procapsids, which is cleaved into capsid proteins VP4 and VP2 after maturation. Allows the capsid to remain inactive before the maturation step. Cysteine protease that cleaves viral polyprotein and specific host proteins. It is responsible for the autocatalytic cleavage between the P1 and P2 regions, which is the first cleavage occurring in the polyprotein. Also cleaves the host translation initiation factor EIF4G1, in order to shut down the capped cellular mRNA translation. Inhibits the host nucleus-cytoplasm protein and RNA trafficking by cleaving host members of the nuclear pores including NUP98, NUP62 and NUP153. Counteracts stress granule formation probably by antagonizing its assembly or promoting its dissassembly. Cleaves and inhibits host IFIH1/MDA5, thereby inhibiting the type-I IFN production and the establishment of the antiviral state. Cleaves and inhibits host MAVS, thereby inhibiting the type-I IFN production and the establishment of the antiviral state. Its function is as follows. Plays an essential role in the virus replication cycle by acting as a viroporin. Creates a pore in the host endoplasmic reticulum and as a consequence releases Ca2+ in the cytoplasm of infected cell. In turn, high levels of cytoplasmic calcium may trigger membrane trafficking and transport of viral ER-associated proteins to viroplasms, sites of viral genome replication. In terms of biological role, induces and associates with structural rearrangements of intracellular membranes. Displays RNA-binding, nucleotide binding and NTPase activities. May play a role in virion morphogenesis and viral RNA encapsidation by interacting with the capsid protein VP3. Functionally, localizes the viral replication complex to the surface of membranous vesicles. Together with protein 3CD binds the Cis-Active RNA Element (CRE) which is involved in RNA synthesis initiation. Acts as a cofactor to stimulate the activity of 3D polymerase, maybe through a nucleid acid chaperone activity. Localizes the viral replication complex to the surface of membranous vesicles. It inhibits host cell endoplasmic reticulum-to-Golgi apparatus transport and causes the disassembly of the Golgi complex, possibly through GBF1 interaction. This would result in depletion of MHC, trail receptors and IFN receptors at the host cell surface. Plays an essential role in viral RNA replication by recruiting ACBD3 and PI4KB at the viral replication sites, thereby allowing the formation of the rearranged membranous structures where viral replication takes place. Its function is as follows. Acts as a primer for viral RNA replication and remains covalently bound to viral genomic RNA. VPg is uridylylated prior to priming replication into VPg-pUpU. The oriI viral genomic sequence may act as a template for this. The VPg-pUpU is then used as primer on the genomic RNA poly(A) by the RNA-dependent RNA polymerase to replicate the viral genome. During genome replication, the VPg-RNA linkage is removed by the host TDP2, thereby accelerating replication. During the late stage of the replication cycle, host TDP2 is excluded from sites of viral RNA synthesis and encapsidation, allowing for the generation of progeny virions. In terms of biological role, involved in the viral replication complex and viral polypeptide maturation. It exhibits protease activity with a specificity and catalytic efficiency that is different from protease 3C. Protein 3CD lacks polymerase activity. Protein 3CD binds to the 5'UTR of the viral genome. Functionally, major viral protease that mediates proteolytic processing of the polyprotein. Cleaves host EIF5B, contributing to host translation shutoff. Also cleaves host PABPC1, contributing to host translation shutoff. Cleaves host RIGI and thus contributes to the inhibition of type I interferon production. Cleaves host NLRP1, triggers host N-glycine-mediated degradation of the autoinhibitory NLRP1 N-terminal fragment. Inhibits the integrated stress response (ISR) in the infected cell by cleaving host G3BP1. Stress granule formation is thus inhibited, which allows protein synthesis and viral replication. Replicates the viral genomic RNA on the surface of intracellular membranes. May form linear arrays of subunits that propagate along a strong head-to-tail interaction called interface-I. Covalently attaches UMP to a tyrosine of VPg, which is used to prime RNA synthesis. The positive stranded RNA genome is first replicated at virus induced membranous vesicles, creating a dsRNA genomic replication form. This dsRNA is then used as template to synthesize positive stranded RNA genomes. ss(+)RNA genomes are either translated, replicated or encapsidated. The protein is Genome polyprotein of Homo sapiens (Human).